A 526-amino-acid chain; its full sequence is Acid-sensing ion channel 1 (526 aa).

At 1–49 (MELKTEEEEVGGVQPVSIQAFASSSTLHGLAHIFSYERLSLKRALWALC) the chain is on the cytoplasmic side. A helical transmembrane segment spans residues 50-66 (FLGSLAVLLCVCTERVQ). Over 67-425 (YYFCYHHVTK…ETIEQKKAYE (359 aa)) the chain is Extracellular. 7 disulfides stabilise this stretch: Cys93-Cys194, Cys172-Cys179, Cys290-Cys365, Cys308-Cys361, Cys312-Cys359, Cys321-Cys343, and Cys323-Cys335. Residues Asn366 and Asn393 are each glycosylated (N-linked (GlcNAc...) asparagine). A discontinuously helical membrane pass occupies residues 426 to 456 (IAGLLGDIGGQMGLFIGASILTVLELFDYAY). A GAS motif; ion selectivity filter motif is present at residues 442 to 444 (GAS). Over 457–526 (EVIKHRLCRR…ARGTFEDFTC (70 aa)) the chain is Cytoplasmic. The residue at position 477 (Ser477) is a Phosphoserine; by PKA. Residue Ser497 is modified to Phosphoserine.

It belongs to the amiloride-sensitive sodium channel (TC 1.A.6) family. ASIC1 subfamily. As to quaternary structure, homotrimer. Heterotrimer; with other ASIC proteins producing channel with different properties. Interacts with PICK1; regulates ASIC1 clustering in membranes. Interacts with STOM; alters heterotrimeric ASIC channels activity. PH-gating could be regulated by serine proteases. Post-translationally, phosphorylation by PKA regulates interaction with PICK1 and subcellular localization. Phosphorylation by PKC may regulate the channel. Expressed in brain areas receiving strong excitatory corticofugal input. In hippocampus, expressed in the hilus of the dentate gyrus. In the cerebral cortex expressed in anterior and posterior cingulate cortex, sensory and motor cortices. In the sensory cortex strongest expression is detected in the whisker barrel field. In sensorimotor and cingulate cortex expression is elevated in layer III. Also expressed in basal ganglia, striatum, ventral pallidum, olfactory tubercle, and nucleus accumbens. Weakly expressed in thalamus with the exception of the habenula and the medial septal nuclei. In olfactory bulb, preferentially expressed in the glomerular layer, within glomeruli. Expressed in cerebellum in the molecular and granule cell layers. Strongly expressed in amygdala complex, particularly in the lateral and basolateral nuclei. Isoform 1 is more abundant in brain compared to isoform 2 (at protein level). Expressed in the nodose ganglion and dorsal root ganglion. Expressed in dendritic spine cells.

The protein resides in the cell membrane. It localises to the postsynaptic cell membrane. It is found in the cell projection. Its subcellular location is the dendrite. The enzyme catalyses Na(+)(in) = Na(+)(out). The catalysed reaction is Ca(2+)(in) = Ca(2+)(out). It catalyses the reaction K(+)(in) = K(+)(out). It carries out the reaction Li(+)(in) = Li(+)(out). Its activity is regulated as follows. Inhibited by the diuretic drug amiloride. With respect to regulation, the activity of the channel is sensitive to rapid decrease in osmotic pressure. Its function is as follows. Forms voltage-independent, pH-gated trimeric sodium channels that act as postsynaptic excitatory receptors in the nervous system, playing a crucial role in regulating synaptic plasticity, learning, and memory. Upon extracellular pH drop this channel elicits transient, fast activating, and completely desensitizing inward currents. Displays high selectivity for sodium ions but can also permit the permeation of other cations. Regulates more or less directly intracellular calcium concentration and CaMKII phosphorylation, and thereby the density of dendritic spines. Modulates neuronal activity in the circuits underlying innate fear. Has high selectivity for sodium ions but is also potentially permeable to other cations including potassium. Could function in cochlear mechanoelectrical transduction. The sequence is that of Acid-sensing ion channel 1 from Mus musculus (Mouse).